Consider the following 361-residue polypeptide: uncharacterized protein (361 aa).

The N-terminal stretch at 1 to 19 (MNLVICVLLLSIWKNNCMT) is a signal peptide. At 20–47 (TNQTNGSSTTGDKPVESMQTKLNYLRRN) the chain is on the extracellular side. Residue asparagine 24 is glycosylated (N-linked (GlcNAc...) asparagine). Residues 48–68 (LLILVGIIIMVFVFICFCYLH) form a helical membrane-spanning segment. The Cytoplasmic segment spans residues 69 to 361 (YNCLSDDASK…QVTSEVTLND (293 aa)). Over residues 99 to 113 (AKTASQCSPETQPML) the composition is skewed to polar residues. 3 disordered regions span residues 99–184 (AKTA…KAHK), 209–247 (PPQL…NPKR), and 295–316 (QNLH…LDSR). Over residues 114 to 133 (STADKSSDSSSPERASAQSS) the composition is skewed to low complexity. Over residues 141–150 (SSLQKPSIPN) the composition is skewed to polar residues. Low complexity predominate over residues 299–308 (VSSKVKSSSR).

Its subcellular location is the membrane. This is an uncharacterized protein from Homo sapiens (Human).